The following is a 322-amino-acid chain: MRGSSFPGFPSTVASHTLRIATRKSPLALWQAEYVASRLRAAHPDLRVELVGMTTRGDKLLDAPLAKVGGKGLFVKELEQGLLEGRADIAVHSMKDVPVEFPEGLHLAAILEREDPRDALVSHRYRSFAELPADARIGTSSLRRQCQIKCRLPGCSLYDLRGNVNTRLAKLDAGEFDAIVLASAGLKRLGFQERIAETLTPEQCLPAIGQGAIGVECRSTDTRTNALLVPLHHPPTAWCVLAERAMNRRLDGGCQVPIAGFAQLEGDTLSLRGLVGNPDGSGIIRAEAVGHPSTFEALGKRVAEHLLDQGADEILRRVYATP.

C254 is modified (S-(dipyrrolylmethanemethyl)cysteine).

Belongs to the HMBS family. As to quaternary structure, monomer. Dipyrromethane is required as a cofactor.

It carries out the reaction 4 porphobilinogen + H2O = hydroxymethylbilane + 4 NH4(+). Its pathway is porphyrin-containing compound metabolism; protoporphyrin-IX biosynthesis; coproporphyrinogen-III from 5-aminolevulinate: step 2/4. In terms of biological role, tetrapolymerization of the monopyrrole PBG into the hydroxymethylbilane pre-uroporphyrinogen in several discrete steps. This Methylococcus capsulatus (strain ATCC 33009 / NCIMB 11132 / Bath) protein is Porphobilinogen deaminase.